A 299-amino-acid polypeptide reads, in one-letter code: UPF0603 protein OsI_019212, chloroplastic (299 aa).

Composition is skewed to low complexity over residues 1 to 14 (METL…LSPL) and 22 to 36 (ASPA…SSPA). Residues 1–41 (METLLSPSTLLSPLRGSKKKPASPAASASSSSSSPARSVVS) constitute a chloroplast transit peptide. 2 disordered regions span residues 1–60 (METL…WRGD) and 244–265 (PDPG…TKEE). The transit peptide at 42–98 (CALRRQQPPPQAVAAWRGDGGRGGGVGSWATFLQHGLAAAALSLAISMAPAPAPAVA) directs the protein to the thylakoid. Over residues 252-265 (KDNKRESNFKTKEE) the composition is skewed to basic and acidic residues. The helical transmembrane segment at 276–296 (VVGGLLVIAFVVPMAQYYAYI) threads the bilayer.

The protein belongs to the UPF0603 family.

The protein localises to the plastid. The protein resides in the chloroplast thylakoid membrane. The sequence is that of UPF0603 protein OsI_019212, chloroplastic from Oryza sativa subsp. indica (Rice).